We begin with the raw amino-acid sequence, 433 residues long: Trigger factor (433 aa).

In terms of domain architecture, PPIase FKBP-type spans 161-246 (NDRVIIDFVG…LNKVENMILP (86 aa)).

The protein belongs to the FKBP-type PPIase family. Tig subfamily.

The protein resides in the cytoplasm. The enzyme catalyses [protein]-peptidylproline (omega=180) = [protein]-peptidylproline (omega=0). Involved in protein export. Acts as a chaperone by maintaining the newly synthesized protein in an open conformation. Functions as a peptidyl-prolyl cis-trans isomerase. The polypeptide is Trigger factor (Haemophilus ducreyi (strain 35000HP / ATCC 700724)).